Reading from the N-terminus, the 277-residue chain is Large ribosomal subunit protein uL2 (277 aa).

Disordered regions lie at residues 28-55 (EPEKSLTHHKHSKQGRNNRGVVTSRHRG) and 207-277 (KAGR…RTQG). Composition is skewed to basic residues over residues 34-43 (THHKHSKQGR), 209-220 (GRTRHRGQRPHV), and 255-265 (LGRKTRNKKKR).

This sequence belongs to the universal ribosomal protein uL2 family. In terms of assembly, part of the 50S ribosomal subunit. Forms a bridge to the 30S subunit in the 70S ribosome.

Functionally, one of the primary rRNA binding proteins. Required for association of the 30S and 50S subunits to form the 70S ribosome, for tRNA binding and peptide bond formation. It has been suggested to have peptidyltransferase activity; this is somewhat controversial. Makes several contacts with the 16S rRNA in the 70S ribosome. The chain is Large ribosomal subunit protein uL2 from Microcystis aeruginosa (strain NIES-843 / IAM M-2473).